We begin with the raw amino-acid sequence, 55 residues long: Large ribosomal subunit protein bL33 (55 aa).

It belongs to the bacterial ribosomal protein bL33 family.

This is Large ribosomal subunit protein bL33 from Mycobacterium leprae (strain Br4923).